An 834-amino-acid chain; its full sequence is Periplasmic nitrate reductase (834 aa).

Residues 1–29 constitute a signal peptide (tat-type signal); sequence MNLTRREFAKANAAAIAAAAAGLPILVRA. Residues 41–97 enclose the 4Fe-4S Mo/W bis-MGD-type domain; sequence LDWNKAPCRFCGTGCSVMVATRDGQVVATHGDIKAEVNRGINCVKGYFLSKIMYGSD. The [4Fe-4S] cluster site is built by Cys-48, Cys-51, Cys-55, and Cys-83. Mo-bis(molybdopterin guanine dinucleotide)-binding positions include Lys-85, Gln-152, Asn-177, Cys-181, 214–221, 245–249, 264–266, Met-375, Gln-379, Asn-485, 511–512, Lys-534, Asp-561, and 721–730; these read WGSNMAEM, STFEH, QTD, SD, and TGRVLEHWHT. Residue Phe-797 coordinates substrate. Asn-805 and Lys-822 together coordinate Mo-bis(molybdopterin guanine dinucleotide).

It belongs to the prokaryotic molybdopterin-containing oxidoreductase family. NasA/NapA/NarB subfamily. In terms of assembly, component of the periplasmic nitrate reductase NapAB complex composed of NapA and NapB. Requires [4Fe-4S] cluster as cofactor. Mo-bis(molybdopterin guanine dinucleotide) is required as a cofactor. Post-translationally, predicted to be exported by the Tat system. The position of the signal peptide cleavage has not been experimentally proven.

Its subcellular location is the periplasm. It catalyses the reaction 2 Fe(II)-[cytochrome] + nitrate + 2 H(+) = 2 Fe(III)-[cytochrome] + nitrite + H2O. In terms of biological role, catalytic subunit of the periplasmic nitrate reductase complex NapAB. Receives electrons from NapB and catalyzes the reduction of nitrate to nitrite. This is Periplasmic nitrate reductase from Pseudomonas paraeruginosa (strain DSM 24068 / PA7) (Pseudomonas aeruginosa (strain PA7)).